The sequence spans 362 residues: Cobalt-precorrin-5B C(1)-methyltransferase (362 aa).

This sequence belongs to the CbiD family.

The enzyme catalyses Co-precorrin-5B + S-adenosyl-L-methionine = Co-precorrin-6A + S-adenosyl-L-homocysteine. Its pathway is cofactor biosynthesis; adenosylcobalamin biosynthesis; cob(II)yrinate a,c-diamide from sirohydrochlorin (anaerobic route): step 6/10. Its function is as follows. Catalyzes the methylation of C-1 in cobalt-precorrin-5B to form cobalt-precorrin-6A. The chain is Cobalt-precorrin-5B C(1)-methyltransferase from Desulfotalea psychrophila (strain LSv54 / DSM 12343).